The following is a 605-amino-acid chain: Leucine aminopeptidase (605 aa).

Lys374, Asp379, and Lys386 together coordinate a peptide. Positions 374 and 379 each coordinate Zn(2+). An L13 loop region spans residues 384–401; it reads NLKAAPGSMIDLMKFDMS. The active site involves Lys386. Residues Asp394, Met396, Asp399, Asp459, and Glu461 each coordinate Zn(2+). 2 residues coordinate a peptide: Asp399 and Asp459. The active site involves Arg463.

It belongs to the peptidase M17 family. Homohexamer composed of dimer of trimers. Both the identity and concentration of metal ions available dictate the extent to which oligomerization occurs; Mn(2+) and Co(2+) induces oligomerization, whereas Mg(2+) has no effect, and Zn(2+) causes irreversible protein aggregation in vitro. Requires Zn(2+) as cofactor.

The protein resides in the cytoplasm. The catalysed reaction is Release of an N-terminal amino acid, Xaa-|-Yaa-, in which Xaa is preferably Leu, but may be other amino acids including Pro although not Arg or Lys, and Yaa may be Pro. Amino acid amides and methyl esters are also readily hydrolyzed, but rates on arylamides are exceedingly low.. It catalyses the reaction L-cysteinylglycine + H2O = L-cysteine + glycine. Oligomerization is required for catalytic activity and is metal-dependent. The type of metal that binds the 2 metal binding sites influences catalytic activity and substrate specificity. In vitro, activated by Co(2+), Mn(2+), Ni(2+), Mg(2+) and Zn(2+) with decreasing strength. Occupancy of the site 2 is essential and sufficient for activating the enzyme but occupation of the 2 sites is necessary for full catalytic activity. Inhibited by fungal metabolite bestatin. Inhibited by Phe-Naphthyl (PNAP). In terms of biological role, aminopeptidase which preferentially cleaves leucine residues from the N-terminus of peptides. Also, has some activity towards tryptophan and methionine and to a lesser extent towards phenylalanine. Has very low activity or no activity towards the other amino acids. In addition, cleaves the Cys-Gly dipeptide, probably as part of the glutathione regulation pathway; cleavage only occurs in the presence of Mn(2+). During the asexual blood stage, plays a role in the final step of host hemoglobin catabolism, by cleaving hemoglobin-derived oligopeptides providing a source of amino acids for the parasite protein synthesis and for the maintenance of osmotic homeostasis. During the asexual blood stage, may also play a role during the ring-trophozoite transition. This is Leucine aminopeptidase from Plasmodium falciparum (isolate 3D7).